The following is a 342-amino-acid chain: Isopentenyl-diphosphate delta-isomerase (342 aa).

11 to 12 (RK) provides a ligand contact to substrate. FMN is bound by residues S68, 69–71 (SMT), S99, and N127. 99–101 (SMR) lines the substrate pocket. A Mg(2+)-binding site is contributed by E163. FMN contacts are provided by residues K194, T224, and 295–296 (AG).

This sequence belongs to the IPP isomerase type 2 family. In terms of assembly, homooctamer. Dimer of tetramers. FMN serves as cofactor. NADPH is required as a cofactor. It depends on Mg(2+) as a cofactor.

The protein resides in the cytoplasm. It carries out the reaction isopentenyl diphosphate = dimethylallyl diphosphate. Functionally, involved in the biosynthesis of isoprenoids. Catalyzes the 1,3-allylic rearrangement of the homoallylic substrate isopentenyl (IPP) to its allylic isomer, dimethylallyl diphosphate (DMAPP). The sequence is that of Isopentenyl-diphosphate delta-isomerase from Rickettsia typhi (strain ATCC VR-144 / Wilmington).